The primary structure comprises 348 residues: Rhodopsin (348 aa).

At M1 the chain carries N-acetylmethionine. Residues 1-36 are Extracellular-facing; it reads MNGTEGPNFYVPFSNKTGVVRSPFEYPQYYLAEPWQ. N-linked (GlcNAc...) asparagine glycans are attached at residues N2 and N15. A helical transmembrane segment spans residues 37-61; sequence FSMLAAYMFLLIVLGFPINFLTLYV. Residues 62 to 73 are Cytoplasmic-facing; that stretch reads TVQHKKLRTPLN. Residues 74–96 traverse the membrane as a helical segment; it reads YILLNLAVADLFMVFGGFTTTLY. Residues 97–110 lie on the Extracellular side of the membrane; the sequence is TSLHGYFVFGPTGC. A disulfide bridge links C110 with C187. A helical membrane pass occupies residues 111–133; sequence NVEGFFATLGGEIALWSLVVLAI. Residues 134–136 carry the 'Ionic lock' involved in activated form stabilization motif; it reads ERY. Residues 134 to 152 lie on the Cytoplasmic side of the membrane; the sequence is ERYVVVCKPMSNFRFGENH. The helical transmembrane segment at 153-173 threads the bilayer; that stretch reads AIMGVAFTWVMALACAAPPLA. Residues 174 to 202 lie on the Extracellular side of the membrane; it reads GWSRYIPEGMQCSCGIDYYTLKPEVNNES. E201 contributes to the Zn(2+) binding site. The chain crosses the membrane as a helical span at residues 203–224; sequence FVIYMFVVHFTIPMIVIFFCYG. Residues 225-252 are Cytoplasmic-facing; the sequence is QLVFTVKEAAAQQQESATTQKAEKEVTR. Residues 253 to 274 traverse the membrane as a helical segment; the sequence is MVIIMVIAFLICWVPYASVAFY. At 275–286 the chain is on the extracellular side; it reads IFTHQGSNFGPI. Position 279 (Q279) interacts with Zn(2+). Residues 287–308 traverse the membrane as a helical segment; it reads FMTLPAFFAKSASIYNPVIYIM. K296 carries the post-translational modification N6-(retinylidene)lysine. The Cytoplasmic segment spans residues 309 to 348; sequence MNKQFRNCMLTTICCGKNPFAEEEGATTVSKTETSQVAPA. 2 S-palmitoyl cysteine lipidation sites follow: C322 and C323. The segment at 330-348 is interaction with SAG; that stretch reads EEEGATTVSKTETSQVAPA. T335 and T336 each carry phosphothreonine. S338 is modified (phosphoserine). Phosphothreonine occurs at positions 340 and 342. S343 bears the Phosphoserine mark.

This sequence belongs to the G-protein coupled receptor 1 family. Opsin subfamily. In terms of assembly, homodimer. May form a complex composed of RHO, GRK1 and RCVRN in a Ca(2+)-dependent manner; RCVRN prevents the interaction between GRK1 and RHO. Interacts with GRK1. Interacts (phosphorylated form) with SAG. Interacts with GNAT1. Interacts with GNAT3. SAG and G-proteins compete for a common binding site. Interacts with PRCD; the interaction promotes PRCD stability. Forms a complex with ASAP1 and ARF4. Forms a complex with ASAP1, RAB11A, Rabin8/RAB3IP, ARF4 and RAB11FIP3; the complex regulates Golgi-to-cilia rhodopsin/RHO transport in photoreceptors. Post-translationally, phosphorylated on some or all of the serine and threonine residues present in the C-terminal region. Contains one covalently linked retinal chromophore. Upon light absorption, the covalently bound 11-cis-retinal is converted to all-trans-retinal. After hydrolysis of the Schiff base and release of the covalently bound all-trans-retinal, active rhodopsin is regenerated by binding of a fresh molecule of 11-cis-retinal.

Its subcellular location is the membrane. It localises to the cell projection. The protein localises to the cilium. It is found in the photoreceptor outer segment. In terms of biological role, photoreceptor required for image-forming vision at low light intensity. Required for photoreceptor cell viability after birth. Light-induced isomerization of 11-cis to all-trans retinal triggers a conformational change that activates signaling via G-proteins. Subsequent receptor phosphorylation mediates displacement of the bound G-protein alpha subunit by the arrestin SAG and terminates signaling. The chain is Rhodopsin (RHO) from Trichechus manatus (Caribbean manatee).